The sequence spans 772 residues: MAEAHQAVAFQFTVTPDGVDFRLSREALKHVYLSGINSWKKRLIRIKNGILRGVYPGSPTSWLVVIMATVGSSFCNVDISLGLVSCIQRCLPQGCGPYQTPQTRALLSMAIFSTGVWVTGIFFFRQTLKLLLCYHGWMFEMHGKTSNLTRIWAMCIRLLSSRHPMLYSFQTSLPKLPVPRVSATIQRYLESVRPLLDDEEYYRMELLAKEFQDKTAPRLQKYLVLKSWWASNYVSDWWEEYIYLRGRSPLMVNSNYYVMDLVLIKNTDVQAARLGNIIHAMIMYRRKLDREEIKPVMALGIVPMCSYQMERMFNTTRIPGKDTDVLQHLSDSRHVAVYHKGRFFKLWLYEGARLLKPQDLEMQFQRILDDPSPPQPGEEKLAALTAGGRVEWAQARQAFFSSGKNKAALEAIERAAFFVALDEESYSYDPEDEASLSLYGKALLHGNCYNRWFDKSFTLISFKNGQLGLNAEHAWADAPIIGHLWEFVLGTDSFHLGYTETGHCLGKPNPALAPPTRLQWDIPKQCQAVIESSYQVAKALADDVELYCFQFLPFGKGLIKKCRTSPDAFVQIALQLAHFRDRGKFCLTYEASMTRMFREGRTETVRSCTSESTAFVQAMMEGSHTKADLRDLFQKAAKKHQNMYRLAMTGAGIDRHLFCLYLVSKYLGVSSPFLAEVLSEPWRLSTSQIPQSQIRMFDPEQHPNHLGAGGGFGPVADDGYGVSYMIAGENTIFFHISSKFSSSETNAQRFGNHIRKALLDIADLFQVPKAYS.

Over 1 to 47 (MAEAHQAVAFQFTVTPDGVDFRLSREALKHVYLSGINSWKKRLIRIK) the chain is Cytoplasmic. Residues 48-73 (NGILRGVYPGSPTSWLVVIMATVGSS) traverse the membrane as a helical segment. Residues 74-102 (FCNVDISLGLVSCIQRCLPQGCGPYQTPQ) lie on the Mitochondrial intermembrane side of the membrane. A helical membrane pass occupies residues 103–122 (TRALLSMAIFSTGVWVTGIF). The Cytoplasmic segment spans residues 123-772 (FFRQTLKLLL…DLFQVPKAYS (650 aa)). Catalysis depends on His-473, which acts as the Proton acceptor. 555–567 (GKGLIKKCRTSPD) serves as a coordination point for CoA. (R)-carnitine-binding residues include Tyr-589 and Thr-602.

It belongs to the carnitine/choline acetyltransferase family. In terms of tissue distribution, strong expression in heart and skeletal muscle. No expression in liver and kidney.

It is found in the mitochondrion outer membrane. The catalysed reaction is (R)-carnitine + hexadecanoyl-CoA = O-hexadecanoyl-(R)-carnitine + CoA. Its pathway is lipid metabolism; fatty acid beta-oxidation. In terms of biological role, catalyzes the transfer of the acyl group of long-chain fatty acid-CoA conjugates onto carnitine, an essential step for the mitochondrial uptake of long-chain fatty acids and their subsequent beta-oxidation in the mitochondrion. In Homo sapiens (Human), this protein is Carnitine O-palmitoyltransferase 1, muscle isoform (CPT1B).